The chain runs to 259 residues: Phospholipase YtpA (259 aa).

Catalysis depends on Ser-88, which acts as the Nucleophile. Residues Asp-206 and His-236 each act as charge relay system in the active site.

The protein belongs to the AB hydrolase superfamily.

The protein operates within antibiotic biosynthesis; bacilysocin biosynthesis. Functionally, phospholipase involved in the biosynthesis of the antibiotic bacilysocin. It probably catalyzes the hydrolysis of the 2-sn-acyl moiety of phosphatidylglycerol to produce bacilysocin (lysophosphatidylglycerol). Is also able to catalyze the hydrolysis reaction of one acyl bond in phosphatidylcholine in vitro (actual cleavage point is unknown), resulting in lysophosphatidylcholine. The polypeptide is Phospholipase YtpA (ytpA) (Bacillus subtilis (strain 168)).